The primary structure comprises 324 residues: Galectin-4 (324 aa).

Galectin domains lie at 19–150 (YKRP…INFL) and 196–324 (YVGT…YVQI). An a beta-D-galactoside-binding site is contributed by 257–263 (WGSEERK). Phosphoserine is present on Ser259.

In terms of assembly, monomer. In terms of tissue distribution, highly expressed in full-length form in small and large intestine and stomach but was not detected in other tissues including lung, liver, kidney and spleen.

Galectin that binds lactose and a related range of sugars. The protein is Galectin-4 (Lgals4) of Rattus norvegicus (Rat).